Reading from the N-terminus, the 194-residue chain is Xanthine phosphoribosyltransferase (194 aa).

Xanthine-binding residues include Leu20 and Asn27. 128-132 (ANGQA) serves as a coordination point for 5-phospho-alpha-D-ribose 1-diphosphate. Lys156 serves as a coordination point for xanthine.

This sequence belongs to the purine/pyrimidine phosphoribosyltransferase family. Xpt subfamily. As to quaternary structure, homodimer.

The protein resides in the cytoplasm. It carries out the reaction XMP + diphosphate = xanthine + 5-phospho-alpha-D-ribose 1-diphosphate. It participates in purine metabolism; XMP biosynthesis via salvage pathway; XMP from xanthine: step 1/1. Its function is as follows. Converts the preformed base xanthine, a product of nucleic acid breakdown, to xanthosine 5'-monophosphate (XMP), so it can be reused for RNA or DNA synthesis. The chain is Xanthine phosphoribosyltransferase from Bacillus licheniformis (strain ATCC 14580 / DSM 13 / JCM 2505 / CCUG 7422 / NBRC 12200 / NCIMB 9375 / NCTC 10341 / NRRL NRS-1264 / Gibson 46).